Consider the following 50-residue polypeptide: uncharacterized protein (50 aa).

This is an uncharacterized protein from Dictyostelium discoideum (Social amoeba).